Here is a 609-residue protein sequence, read N- to C-terminus: UvrABC system protein C (609 aa).

Residues 16–94 (SSAGVYRMYD…IKQYMPKYNV (79 aa)) enclose the GIY-YIG domain. Positions 203–238 (QQVISALVDKMELAAERQAYEQAARFRDQIMALRKV) constitute a UVR domain.

Belongs to the UvrC family. In terms of assembly, interacts with UvrB in an incision complex.

The protein localises to the cytoplasm. The UvrABC repair system catalyzes the recognition and processing of DNA lesions. UvrC both incises the 5' and 3' sides of the lesion. The N-terminal half is responsible for the 3' incision and the C-terminal half is responsible for the 5' incision. The sequence is that of UvrABC system protein C from Shewanella baltica (strain OS195).